The sequence spans 280 residues: Cis-2,3-dihydrobiphenyl-2,3-diol dehydrogenase (280 aa).

9–33 lines the NAD(+) pocket; the sequence is LVTGGCAGLGRAIVDRFVCEGARVA. Residue S142 coordinates substrate. Y155 (proton acceptor) is an active-site residue.

The protein belongs to the short-chain dehydrogenases/reductases (SDR) family.

It carries out the reaction (2R,3S)-3-phenylcyclohexa-3,5-diene-1,2-diol + NAD(+) = biphenyl-2,3-diol + NADH + H(+). The protein operates within xenobiotic degradation; biphenyl degradation; 2-hydroxy-2,4-pentadienoate and benzoate from biphenyl: step 2/4. In Rhodococcus globerulus, this protein is Cis-2,3-dihydrobiphenyl-2,3-diol dehydrogenase (bphB).